The chain runs to 488 residues: MKMMMMIILLLCSIILITILFFKKQSRGKKSNAPPSPPRLPLIRNLHQLGRHPHRSLCSLSHRYGPLMLLHFGSVPVLVVSSADAAKDVLKTHDRVFASRPRSKIFDKIFYNGRDVALAPYGEYWRQMKSVCVLHLFSNKMVRSFRDVRQEEISLMIEKIRISSSLRINLSEILVNLTNNVICRVALGRKYGGKTDFKDLMKRLTRLLGEFSVGSYVSWLAWIDWIRGLDGQLIKISNDLDEFLERVVQDHVDGDGHKNDFVDFLLTIEREKSVGFEIDRLSIKAIILDVFVGDMDTTYTLLEWAMTELLCHHECLDRLQEEVRMVCKDKSGVSEDDLQDMKYLKAVIKETLRLHPPLPLMVPHESTHDVKLRDYHIPAGTHVMINAWAIGREAATWGPDAEEFRPERHLNSYVDYRGQDTELVPFGAGRRICPAISFAVVLDEVVLANLVHQFDWTLPEESTEYQTDVAESTGMAVHRMFPLFAMTT.

A helical transmembrane segment spans residues 3–23 (MMMMIILLLCSIILITILFFK). Cysteine 433 contributes to the heme binding site.

Belongs to the cytochrome P450 family. Heme serves as cofactor.

The protein resides in the membrane. This is Cytochrome P450 71A24 (CYP71A24) from Arabidopsis thaliana (Mouse-ear cress).